A 562-amino-acid chain; its full sequence is Gut esterase 1 (562 aa).

Residues 1–16 (MRIFLVSVILINACWA) form the signal peptide. N73 is a glycosylation site (N-linked (GlcNAc...) asparagine; atypical). Cysteines 75 and 93 form a disulfide. Residue S198 is the Acyl-ester intermediate of the active site. An intrachain disulfide couples C250 to C258. Catalysis depends on charge relay system residues E319 and H452. The short motif at 559–562 (KDEL) is the Prevents secretion from ER element.

Belongs to the type-B carboxylesterase/lipase family. Expressed only in the intestine.

The protein localises to the endoplasmic reticulum lumen. It catalyses the reaction a carboxylic ester + H2O = an alcohol + a carboxylate + H(+). In Caenorhabditis elegans, this protein is Gut esterase 1 (ges-1).